A 358-amino-acid chain; its full sequence is Biotin synthase (358 aa).

A Radical SAM core domain is found at 50–277 (NEVQVSTLCS…KSHVRLSAGR (228 aa)). [4Fe-4S] cluster is bound by residues cysteine 65, cysteine 69, and cysteine 72. [2Fe-2S] cluster contacts are provided by cysteine 109, cysteine 140, cysteine 200, and arginine 272.

Belongs to the radical SAM superfamily. Biotin synthase family. Homodimer. It depends on [4Fe-4S] cluster as a cofactor. Requires [2Fe-2S] cluster as cofactor.

It catalyses the reaction (4R,5S)-dethiobiotin + (sulfur carrier)-SH + 2 reduced [2Fe-2S]-[ferredoxin] + 2 S-adenosyl-L-methionine = (sulfur carrier)-H + biotin + 2 5'-deoxyadenosine + 2 L-methionine + 2 oxidized [2Fe-2S]-[ferredoxin]. The protein operates within cofactor biosynthesis; biotin biosynthesis; biotin from 7,8-diaminononanoate: step 2/2. In terms of biological role, catalyzes the conversion of dethiobiotin (DTB) to biotin by the insertion of a sulfur atom into dethiobiotin via a radical-based mechanism. This Cellvibrio japonicus (strain Ueda107) (Pseudomonas fluorescens subsp. cellulosa) protein is Biotin synthase.